We begin with the raw amino-acid sequence, 561 residues long: Lanosterol 14-alpha demethylase (561 aa).

Cys501 serves as a coordination point for heme.

Belongs to the cytochrome P450 family. Requires heme as cofactor.

It localises to the membrane. It carries out the reaction a 14alpha-methyl steroid + 3 reduced [NADPH--hemoprotein reductase] + 3 O2 = a Delta(14) steroid + formate + 3 oxidized [NADPH--hemoprotein reductase] + 4 H2O + 4 H(+). It catalyses the reaction a 14alpha-methyl steroid + reduced [NADPH--hemoprotein reductase] + O2 = a 14alpha-hydroxymethyl steroid + oxidized [NADPH--hemoprotein reductase] + H2O + H(+). The enzyme catalyses a 14alpha-hydroxymethyl steroid + reduced [NADPH--hemoprotein reductase] + O2 = a 14alpha-formyl steroid + oxidized [NADPH--hemoprotein reductase] + 2 H2O + H(+). The catalysed reaction is a 14alpha-formyl steroid + reduced [NADPH--hemoprotein reductase] + O2 = a Delta(14) steroid + formate + oxidized [NADPH--hemoprotein reductase] + H2O + 2 H(+). It carries out the reaction lanosterol + 3 reduced [NADPH--hemoprotein reductase] + 3 O2 = 4,4-dimethyl-5alpha-cholesta-8,14,24-trien-3beta-ol + formate + 3 oxidized [NADPH--hemoprotein reductase] + 4 H2O + 4 H(+). It catalyses the reaction lanosterol + reduced [NADPH--hemoprotein reductase] + O2 = 32-hydroxylanosterol + oxidized [NADPH--hemoprotein reductase] + H2O + H(+). The enzyme catalyses 32-hydroxylanosterol + reduced [NADPH--hemoprotein reductase] + O2 = 32-oxolanosterol + oxidized [NADPH--hemoprotein reductase] + 2 H2O + H(+). The catalysed reaction is 32-oxolanosterol + reduced [NADPH--hemoprotein reductase] + O2 = 4,4-dimethyl-5alpha-cholesta-8,14,24-trien-3beta-ol + formate + oxidized [NADPH--hemoprotein reductase] + H2O + 2 H(+). It carries out the reaction eburicol + 3 reduced [NADPH--hemoprotein reductase] + 3 O2 = 14-demethyleburicol + formate + 3 oxidized [NADPH--hemoprotein reductase] + 4 H2O + 4 H(+). It catalyses the reaction eburicol + reduced [NADPH--hemoprotein reductase] + O2 = 32-hydroxyeburicol + oxidized [NADPH--hemoprotein reductase] + H2O + H(+). The enzyme catalyses 32-hydroxyeburicol + reduced [NADPH--hemoprotein reductase] + O2 = 32-oxoeburicol + oxidized [NADPH--hemoprotein reductase] + 2 H2O + H(+). The catalysed reaction is 32-oxoeburicol + reduced [NADPH--hemoprotein reductase] + O2 = 14-demethyleburicol + formate + oxidized [NADPH--hemoprotein reductase] + H2O + 2 H(+). It participates in steroid biosynthesis; zymosterol biosynthesis; zymosterol from lanosterol: step 1/6. In terms of biological role, sterol 14alpha-demethylase that plays a critical role in the third module of ergosterol biosynthesis pathway, being ergosterol the major sterol component in fungal membranes that participates in a variety of functions. The third module or late pathway involves the ergosterol synthesis itself through consecutive reactions that mainly occur in the endoplasmic reticulum (ER) membrane. In filamentous fungi, during the initial step of this module, lanosterol (lanosta-8,24-dien-3beta-ol) can be metabolized to eburicol. Sterol 14alpha-demethylase catalyzes the three-step oxidative removal of the 14alpha-methyl group (C-32) of both these sterols in the form of formate, and converts eburicol and lanosterol to 14-demethyleburicol (4,4,24-trimethylergosta-8,14,24(28)-trienol) and 4,4-dimethyl-5alpha-cholesta-8,14,24-trien-3beta-ol, respectively, which are further metabolized by other enzymes in the pathway to ergosterol. Can also use substrates not intrinsic to fungi, such as 24,25-dihydrolanosterol (DHL), producing 4,4-dimethyl-8,14-cholestadien-3-beta-ol, but at lower rates than the endogenous substrates. This chain is Lanosterol 14-alpha demethylase (ERG11), found in Mycosarcoma maydis (Corn smut fungus).